We begin with the raw amino-acid sequence, 476 residues long: Transcription factor EB (476 aa).

Disordered stretches follow at residues 1-66 and 107-142; these read MASR…PPVP and HISP…APNS. The interval 1–167 is interaction with ACSS2; sequence MASRIGLRMQ…DDVIDNIMRL (167 aa). Positions 26–44 are enriched in low complexity; that stretch reads QQQAVMHYMQQQQQQQQQQ. A phosphoserine mark is found at serine 109, serine 114, serine 122, and serine 138. Low complexity predominate over residues 132–142; that stretch reads SSSAGNSAPNS. Positions 136–153 match the Nuclear export signal motif; that stretch reads GNSAPNSPMAMLHIGSNP. Serine 142 bears the Phosphoserine; by MTOR mark. The segment at 156-165 is strong transcription activation domain; sequence ELDDVIDNIM. Threonine 183 is subject to Phosphothreonine. A Phosphoserine; by MTOR modification is found at serine 211. Position 212 is an S-(2,3-dicarboxypropyl)cysteine (cysteine 212). Residues 235–288 enclose the bHLH domain; it reads QKKDNHNLIERRRRFNINDRIKELGMLIPKANDLDVRWNKGTILKASVDYIRRM. The Nuclear localization signal signature appears at 245–248; it reads RRRR. Positions 298–319 are leucine-zipper; the sequence is LENHSRRLEMTNKQLWLRIQEL. Phosphoserine is present on serine 332. Residues 349–430 are disordered; sequence ELPSEEGPGE…HGSPFPSLSK (82 aa). Over residues 369–390 the composition is skewed to pro residues; that stretch reads PEPLPALPPQAPLPLPTQPPSP. A phosphoserine mark is found at serine 423, serine 441, serine 466, serine 467, and serine 469. Residues 447–469 show a composition bias toward low complexity; it reads SDPLLSTMSPEASKASSRRSSFS. The disordered stretch occupies residues 447 to 476; that stretch reads SDPLLSTMSPEASKASSRRSSFSMEEGDVL.

It belongs to the MiT/TFE family. As to quaternary structure, homodimer and heterodimer; with TFE3 or MITF. Interacts (when phosphorylated by MTOR) with YWHAZ; promoting retention in the cytosol. Interacts with IRGM; promoting association between TFEB and PPP3CB and dephosphorylation. Interacts with small GTPases Rag (RagA/RRAGA, RagB/RRAGB, RagC/RRAGC and/or RagD/RRAGD); promoting its recruitment to lysosomal membrane in the presence of nutrients. Interacts with ACSS2. In terms of processing, phosphorylation at Ser-211 by MTOR via non-canonical mTORC1 pathway regulates its subcellular location and activity. When nutrients are present, phosphorylation by MTOR promotes association with 14-3-3/YWHA adapters and retention in the cytosol. Inhibition of mTORC1, starvation and lysosomal disruption, promotes dephosphorylation by calcineurin PPP3CB and translocation to the nucleus. Dephosphorylated by calcineurin PPP3CB in response to lysosomal Ca(2+) release. IRGM promotes dephosphorylation by calcineurin PPP3CB, resulting in TFEB nuclear translocation and stimulation of lysosomal biogenesis. Dephosphorylated by phosphatase PPP3CA following Coxsackievirus B3 infection, leading to nuclear translocation. Exported from the nucleus in a mTORC1-dependent manner in response to nutrient availability. Post-translationally, alkylated via a non-enzymatic covalent modification. Itaconate, an anti-inflammatory metabolite generated in response to lipopolysaccharide, alkylates Cys-212, preventing association with 14-3-3/YWHA adapters, thereby promoting nuclear translocation and activity. Sumoylated; does not affect dimerization with MITF. In terms of processing, (Microbial infection) Cleavage by Coxsackievirus B3 protease 3C after site Gln-60. This non-phosphorylated cleavage product retains its ability to interact with TFEB, TFE3 or MITF and presents impaired transcriptional activity, resulting in disruption of lysosomal functions and increased viral infection.

It localises to the nucleus. The protein resides in the cytoplasm. The protein localises to the cytosol. It is found in the lysosome membrane. With respect to regulation, inhibited by eltrombopag drug, which binds to the bHLH domain and disrupts DNA-binding. In terms of biological role, transcription factor that acts as a master regulator of lysosomal biogenesis, autophagy, lysosomal exocytosis, lipid catabolism, energy metabolism and immune response. Specifically recognizes and binds E-box sequences (5'-CANNTG-3'); efficient DNA-binding requires dimerization with itself or with another MiT/TFE family member such as TFE3 or MITF. Involved in the cellular response to amino acid availability by acting downstream of MTOR: in the presence of nutrients, TFEB phosphorylation by MTOR promotes its cytosolic retention and subsequent inactivation. Upon starvation or lysosomal stress, inhibition of MTOR induces TFEB dephosphorylation, resulting in nuclear localization and transcription factor activity. Specifically recognizes and binds the CLEAR-box sequence (5'-GTCACGTGAC-3') present in the regulatory region of many lysosomal genes, leading to activate their expression, thereby playing a central role in expression of lysosomal genes. Regulates lysosomal positioning in response to nutrient deprivation by promoting the expression of PIP4P1. Acts as a positive regulator of autophagy by promoting expression of genes involved in autophagy. In association with TFE3, activates the expression of CD40L in T-cells, thereby playing a role in T-cell-dependent antibody responses in activated CD4(+) T-cells and thymus-dependent humoral immunity. Specifically recognizes the gamma-E3 box, a subset of E-boxes, present in the heavy-chain immunoglobulin enhancer. Plays a role in the signal transduction processes required for normal vascularization of the placenta. Involved in the immune response to infection by the bacteria S.aureus, S.typhimurium or S.enterica: infection promotes itaconate production, leading to alkylation, resulting in nuclear localization and transcription factor activity. Itaconate-mediated alkylation activates TFEB-dependent lysosomal biogenesis, facilitating the bacteria clearance during the antibacterial innate immune response. In association with ACSS2, promotes the expression of genes involved in lysosome biogenesis and both autophagy upon glucose deprivation. The chain is Transcription factor EB from Homo sapiens (Human).